We begin with the raw amino-acid sequence, 260 residues long: Triosephosphate isomerase (260 aa).

11–13 (NWK) is a substrate binding site. H103 (electrophile) is an active-site residue. The active-site Proton acceptor is the E175. Substrate contacts are provided by residues G181, S220, and 241-242 (GG).

It belongs to the triosephosphate isomerase family. In terms of assembly, homodimer.

It localises to the cytoplasm. The enzyme catalyses D-glyceraldehyde 3-phosphate = dihydroxyacetone phosphate. The protein operates within carbohydrate biosynthesis; gluconeogenesis. It functions in the pathway carbohydrate degradation; glycolysis; D-glyceraldehyde 3-phosphate from glycerone phosphate: step 1/1. Its function is as follows. Involved in the gluconeogenesis. Catalyzes stereospecifically the conversion of dihydroxyacetone phosphate (DHAP) to D-glyceraldehyde-3-phosphate (G3P). The polypeptide is Triosephosphate isomerase (Shewanella piezotolerans (strain WP3 / JCM 13877)).